The chain runs to 466 residues: Citrate synthase, mitochondrial (466 aa).

The N-terminal 27 residues, 1 to 27 (MALLTAAARLFGAKNASCLVLAARHAS), are a transit peptide targeting the mitochondrion. Residues 2–21 (ALLTAAARLFGAKNASCLVL) carry the SIFI-degron motif. Position 57 is an N6-succinyllysine (K57). K76 bears the N6-acetyllysine; alternate mark. Position 76 is an N6-succinyllysine; alternate (K76). 2 positions are modified to N6-succinyllysine: K103 and K193. The residue at position 226 (S226) is a Phosphoserine. H301 is a catalytic residue. Residues K321 and K327 each carry the N6-acetyllysine; alternate modification. N6-succinyllysine; alternate occurs at positions 321 and 327. H347 is a catalytic residue. R356 contributes to the oxaloacetate binding site. K375 carries the N6-acetyllysine; alternate modification. Position 375 is an N6-succinyllysine; alternate (K375). Position 382 is an N6-acetyllysine (K382). K393 bears the N6-acetyllysine; alternate mark. K393 carries the N6-succinyllysine; alternate modification. Residue K395 is modified to N6,N6,N6-trimethyllysine. Residue D402 is part of the active site. Positions 428 and 448 each coordinate oxaloacetate. Residue K450 is modified to N6-succinyllysine. Position 459 is an N6-acetyllysine; alternate (K459). K459 is modified (N6-succinyllysine; alternate).

This sequence belongs to the citrate synthase family. In terms of assembly, homodimer. In terms of processing, methylated. Trimethylation at Lys-395 by CSKMT decreases citrate synthase activity. In response to mitochondrial stress, the precursor protein is ubiquitinated by the SIFI complex in the cytoplasm before mitochondrial import, leading to its degradation. Within the SIFI complex, UBR4 initiates ubiquitin chain that are further elongated or branched by KCMF1.

The protein localises to the mitochondrion matrix. It catalyses the reaction oxaloacetate + acetyl-CoA + H2O = citrate + CoA + H(+). It functions in the pathway carbohydrate metabolism; tricarboxylic acid cycle; isocitrate from oxaloacetate: step 1/2. Its function is as follows. Key enzyme of the Krebs tricarboxylic acid cycle which catalyzes the synthesis of citrate from acetyl coenzyme A and oxaloacetate. This Bos taurus (Bovine) protein is Citrate synthase, mitochondrial (CS).